The primary structure comprises 579 residues: Aspartate--tRNA(Asp/Asn) ligase (579 aa).

Glu169 is a binding site for L-aspartate. The aspartate stretch occupies residues 193–196 (QLFK). Residue Arg215 coordinates L-aspartate. Residues 215–217 (RDE) and Gln224 each bind ATP. Position 437 (His437) interacts with L-aspartate. Glu471 serves as a coordination point for ATP. Arg478 lines the L-aspartate pocket. 523 to 526 (GWDR) lines the ATP pocket. The disordered stretch occupies residues 551-579 (DPLTGAPTPITAEQRREAGVDAVPEQATS).

Belongs to the class-II aminoacyl-tRNA synthetase family. Type 1 subfamily. As to quaternary structure, homodimer.

It is found in the cytoplasm. It catalyses the reaction tRNA(Asx) + L-aspartate + ATP = L-aspartyl-tRNA(Asx) + AMP + diphosphate. Its function is as follows. Aspartyl-tRNA synthetase with relaxed tRNA specificity since it is able to aspartylate not only its cognate tRNA(Asp) but also tRNA(Asn). Reaction proceeds in two steps: L-aspartate is first activated by ATP to form Asp-AMP and then transferred to the acceptor end of tRNA(Asp/Asn). This chain is Aspartate--tRNA(Asp/Asn) ligase, found in Thermobifida fusca (strain YX).